Here is a 423-residue protein sequence, read N- to C-terminus: Mannose-6-phosphate isomerase (423 aa).

Alanine 2 bears the N-acetylalanine mark. A phosphoserine mark is found at serine 102 and serine 108. Residues glutamine 110, histidine 112, glutamate 137, and histidine 276 each contribute to the Zn(2+) site. The active site involves arginine 295.

Belongs to the mannose-6-phosphate isomerase type 1 family. Zn(2+) is required as a cofactor.

The protein localises to the cytoplasm. It catalyses the reaction D-mannose 6-phosphate = D-fructose 6-phosphate. The protein operates within nucleotide-sugar biosynthesis; GDP-alpha-D-mannose biosynthesis; alpha-D-mannose 1-phosphate from D-fructose 6-phosphate: step 1/2. Functionally, isomerase that catalyzes the interconversion of fructose-6-P and mannose-6-P and has a critical role in the supply of D-mannose derivatives required for many eukaryotic glycosylation reactions. The chain is Mannose-6-phosphate isomerase (MPI) from Bos taurus (Bovine).